The chain runs to 387 residues: Chorismate synthase (387 aa).

2 residues coordinate NADP(+): R42 and R48. FMN contacts are provided by residues 131-133, 251-252, G295, 310-314, and R336; these read RSS, QA, and KPIPT.

The protein belongs to the chorismate synthase family. Homotetramer. It depends on FMNH2 as a cofactor.

It carries out the reaction 5-O-(1-carboxyvinyl)-3-phosphoshikimate = chorismate + phosphate. The protein operates within metabolic intermediate biosynthesis; chorismate biosynthesis; chorismate from D-erythrose 4-phosphate and phosphoenolpyruvate: step 7/7. Its function is as follows. Catalyzes the anti-1,4-elimination of the C-3 phosphate and the C-6 proR hydrogen from 5-enolpyruvylshikimate-3-phosphate (EPSP) to yield chorismate, which is the branch point compound that serves as the starting substrate for the three terminal pathways of aromatic amino acid biosynthesis. This reaction introduces a second double bond into the aromatic ring system. This is Chorismate synthase from Syntrophotalea carbinolica (strain DSM 2380 / NBRC 103641 / GraBd1) (Pelobacter carbinolicus).